Reading from the N-terminus, the 461-residue chain is Argininosuccinate lyase (461 aa).

This sequence belongs to the lyase 1 family. Argininosuccinate lyase subfamily.

It is found in the cytoplasm. The catalysed reaction is 2-(N(omega)-L-arginino)succinate = fumarate + L-arginine. It participates in amino-acid biosynthesis; L-arginine biosynthesis; L-arginine from L-ornithine and carbamoyl phosphate: step 3/3. The protein is Argininosuccinate lyase of Streptococcus gordonii (strain Challis / ATCC 35105 / BCRC 15272 / CH1 / DL1 / V288).